A 196-amino-acid chain; its full sequence is Imidazoleglycerol-phosphate dehydratase (196 aa).

The protein belongs to the imidazoleglycerol-phosphate dehydratase family.

It is found in the cytoplasm. The catalysed reaction is D-erythro-1-(imidazol-4-yl)glycerol 3-phosphate = 3-(imidazol-4-yl)-2-oxopropyl phosphate + H2O. It participates in amino-acid biosynthesis; L-histidine biosynthesis; L-histidine from 5-phospho-alpha-D-ribose 1-diphosphate: step 6/9. The protein is Imidazoleglycerol-phosphate dehydratase of Desulfitobacterium hafniense (strain Y51).